A 157-amino-acid polypeptide reads, in one-letter code: Probable succinate transporter subunit YjjB (157 aa).

4 helical membrane passes run 8-28 (FALA…AMVF), 50-70 (MILM…SMLV), 87-107 (VFTV…TAMI), and 129-149 (FLTA…PGLW).

The protein belongs to the ThrE exporter (TC 2.A.79) family. The transporter is composed of YjjB and YjjP.

It is found in the cell inner membrane. Its function is as follows. Involved in succinate export with YjjP. Both proteins are required for export. In Escherichia coli (strain SE11), this protein is Probable succinate transporter subunit YjjB.